We begin with the raw amino-acid sequence, 578 residues long: Signal peptide peptidase-like 2B (578 aa).

The N-terminal stretch at 1–19 (MAAARLAAALLLLAAQVAC) is a signal peptide. Residues 20-168 (EFGVLRVVSQ…APSEPVMDYN (149 aa)) are Lumenal-facing. Positions 61-145 (LRDLSTTQLC…LLSHRDLQDI (85 aa)) constitute a PA domain. N-linked (GlcNAc...) asparagine glycosylation is found at N91 and N123. A helical membrane pass occupies residues 169 to 189 (MVIIFVMAVGTVAIGGYWAGS). Residues 190-216 (HDVKKYMKHKRDDGPEKQEDEAVDVTP) are Cytoplasmic-facing. The helical transmembrane segment at 217–237 (VMICVFVVMCCFMLVLLYYFY) threads the bilayer. Residues 238 to 239 (DR) lie on the Lumenal side of the membrane. Residues 240-260 (LVYVIIGIFCLASSTGLYSCL) form a helical membrane-spanning segment. Over 261–286 (APFVRKLPFCTCRVPDNNLPYFHKRP) the chain is Cytoplasmic. The chain crosses the membrane as a helical span at residues 287-307 (QARMLLLALFCVTVSVVWGIF). At 308–312 (RNEDQ) the chain is on the lumenal side. A helical transmembrane segment spans residues 313–333 (WAWVLQDTLGIAFCLYMLKTI). The Cytoplasmic segment spans residues 334-341 (RLPTFKAC). The helical transmembrane segment at 342–362 (TLLLLVLFIYDIFFVFITPFL) threads the bilayer. Residue D352 is part of the active site. Over 363 to 405 (TKSGNSIMVEVATGPSNSSTHEKLPMVLKVPRLNTSPLSLCDR) the chain is Lumenal. A helical membrane pass occupies residues 406 to 426 (PFSLLGFGDILVPGLLVAYCH). Residue D414 is part of the active site. The Cytoplasmic segment spans residues 427–438 (RFDIQVQSSRIY). The helical transmembrane segment at 439-459 (FVACTIAYGLGLLVTFVALVL) threads the bilayer. The Lumenal portion of the chain corresponds to 460–463 (MQRG). Residues 464 to 484 (QPALLYLVPCTLLTSCTVALW) form a helical membrane-spanning segment. The PAL motif lies at 465–467 (PAL). Residues 485 to 578 (RRELGAFWTG…IPVVKPETSA (94 aa)) are Cytoplasmic-facing. The tract at residues 502–578 (PQTPWAATQG…IPVVKPETSA (77 aa)) is disordered. Residues 520 to 529 (SSLSEQPPSE) show a composition bias toward low complexity.

The protein belongs to the peptidase A22B family. As to quaternary structure, monomer. Homodimer. Interacts with ITM2B and TNF. In terms of processing, glycosylated.

The protein resides in the cell membrane. It is found in the golgi apparatus membrane. It localises to the lysosome membrane. The protein localises to the endosome membrane. Its subcellular location is the membrane. In terms of biological role, intramembrane-cleaving aspartic protease (I-CLiP) that cleaves type II membrane signal peptides in the hydrophobic plane of the membrane. Functions in ITM2B and TNF processing. Catalyzes the intramembrane cleavage of the anchored fragment of shed TNF-alpha (TNF), which promotes the release of the intracellular domain (ICD) for signaling to the nucleus. May play a role in the regulation of innate and adaptive immunity. The chain is Signal peptide peptidase-like 2B from Mus musculus (Mouse).